A 187-amino-acid chain; its full sequence is uncharacterized protein (187 aa).

Gly-2 is lipidated: N-myristoyl glycine; by host.

The protein belongs to the mimivirus L332/L333/L334 family.

This is an uncharacterized protein from Acanthamoeba polyphaga (Amoeba).